We begin with the raw amino-acid sequence, 439 residues long: Protein ABHD8 (439 aa).

Disordered regions lie at residues 54–75 (HAGP…PGVK) and 122–148 (ELAE…RPKR). The span at 58–67 (APIPTPPPPP) shows a compositional bias: pro residues. Residues 138-148 (GRRRRPRRPKR) show a composition bias toward basic residues. The AB hydrolase-1 domain maps to 169–271 (VLFFIHGVGG…HKVIMINGGG (103 aa)). Residues Ser-244, Asp-362, and His-390 each act as charge relay system in the active site. A disordered region spans residues 415-439 (EAEPKLEPKPKPQLLQPEPAPGEEK).

Belongs to the AB hydrolase superfamily. Interacts with NLRP3 (via NACHT and LLR domains); this interaction is enhanced in the presence of NLRP3 inflammasome inducers, such as ATP, nigericin, silica, or alum. Interacts with ZDHHC12.

It is found in the cytoplasm. In terms of biological role, negatively regulates NLRP3-driven inflammation. Promotes NLRP3 degradation through the chaperone-mediated autophagy (CMA) pathway, hence attenuating inflammasome activation and IL1B secretion. Acts by recruiting palmitoyltransferase ZDHHC12 to NLRP3, facilitating NLRP3 palmitoylation and subsequent degradation. This Mus musculus (Mouse) protein is Protein ABHD8.